The sequence spans 472 residues: Sulfate adenylyltransferase subunit 1 (472 aa).

Residues 24–240 form the tr-type G domain; it reads KSLLRFLTCG…ENAEVGTRDL (217 aa). The interval 33–40 is G1; the sequence is GSVDDGKS. 33-40 contributes to the GTP binding site; it reads GSVDDGKS. The segment at 91–95 is G2; sequence GITID. The G3 stretch occupies residues 112 to 115; sequence DTPG. Residues 112–116 and 167–170 contribute to the GTP site; these read DTPGH and NKMD. Positions 167-170 are G4; it reads NKMD. Residues 204–206 form a G5 region; sequence SAL.

Belongs to the TRAFAC class translation factor GTPase superfamily. Classic translation factor GTPase family. CysN/NodQ subfamily. In terms of assembly, heterodimer composed of CysD, the smaller subunit, and CysN.

The catalysed reaction is sulfate + ATP + H(+) = adenosine 5'-phosphosulfate + diphosphate. It participates in sulfur metabolism; hydrogen sulfide biosynthesis; sulfite from sulfate: step 1/3. With CysD forms the ATP sulfurylase (ATPS) that catalyzes the adenylation of sulfate producing adenosine 5'-phosphosulfate (APS) and diphosphate, the first enzymatic step in sulfur assimilation pathway. APS synthesis involves the formation of a high-energy phosphoric-sulfuric acid anhydride bond driven by GTP hydrolysis by CysN coupled to ATP hydrolysis by CysD. The sequence is that of Sulfate adenylyltransferase subunit 1 from Tolumonas auensis (strain DSM 9187 / NBRC 110442 / TA 4).